The chain runs to 330 residues: Elongation factor Ts (330 aa).

An involved in Mg(2+) ion dislocation from EF-Tu region spans residues 79 to 82 (TDFV).

It belongs to the EF-Ts family.

The protein localises to the cytoplasm. In terms of biological role, associates with the EF-Tu.GDP complex and induces the exchange of GDP to GTP. It remains bound to the aminoacyl-tRNA.EF-Tu.GTP complex up to the GTP hydrolysis stage on the ribosome. The chain is Elongation factor Ts from Bacteroides thetaiotaomicron (strain ATCC 29148 / DSM 2079 / JCM 5827 / CCUG 10774 / NCTC 10582 / VPI-5482 / E50).